The following is a 280-amino-acid chain: MKYRFPKGMRPSTLRERESFYRYEFSLDRVEKWLGWRDIGNTAFAVIIGRHSDIYLPEYEDIKRKAVIIDEHKGLADVLDYILQYLPEGVYYDRNVYSDIKLCVERGCDYKNCWGCENFLGQELAFDIDPENVSCPYHGSIEDKMKRGEGLSFCMLEFKKVRKLTLSLYDELRAEYKKLRVVFSGRGFHIHVFDRKALKMSREERVELAKAYSHYAIDEWVTNGEMRLIRLPYSLNGLVSRICSPLSIEELPAFDPRNHSIPSFLLSSPRRSSRASSSRP.

The protein belongs to the eukaryotic-type primase small subunit family.

This is an uncharacterized protein from Archaeoglobus fulgidus (strain ATCC 49558 / DSM 4304 / JCM 9628 / NBRC 100126 / VC-16).